Here is a 372-residue protein sequence, read N- to C-terminus: MTYCKRGTEGLIYLEDGTLLRGCGFGAKGVRYGEVVFTTAMNGYPESMTDPSYRGQILIITHPLVGNYGVPNPIVRNGILQNFESEQIQIEGLVVTEETDPSKWNSSKSLHQWMAEQGIPGVSSVDTRLLVKKVRTLGSMMGVIASGEHVEDPRKYIEMRYDEIDFTKFTSPKSPIIHQNNSPDIIVLVDCGIKHGILEELYKTGFTIVRVPCKSSADEIMNYSPKGIVFGNGPGNPNILKDLVKNFSAVMEYKLPTLGICLGHQVATLALGGNVRKMKFGHRAINKPVTDISNNKCYISTHNHGYGVYKEDIPPDTQIWFVNPDDGVVEGLIHKRLPLITTQFHPEARPGPNDTTWVFQKFKKMVIKDEGN.

Positions 1–186 (MTYCKRGTEG…IHQNNSPDII (186 aa)) are CPSase. L-glutamine is bound by residues S52, G233, and G235. A Glutamine amidotransferase type-1 domain is found at 185–372 (IIVLVDCGIK…KKMVIKDEGN (188 aa)). Residue C261 is the Nucleophile of the active site. L262, Q265, N303, G305, and Y306 together coordinate L-glutamine. Residues H345 and E347 contribute to the active site.

This sequence belongs to the CarA family. As to quaternary structure, composed of two chains; the small (or glutamine) chain promotes the hydrolysis of glutamine to ammonia, which is used by the large (or ammonia) chain to synthesize carbamoyl phosphate. Tetramer of heterodimers (alpha,beta)4.

The catalysed reaction is hydrogencarbonate + L-glutamine + 2 ATP + H2O = carbamoyl phosphate + L-glutamate + 2 ADP + phosphate + 2 H(+). It catalyses the reaction L-glutamine + H2O = L-glutamate + NH4(+). Its pathway is amino-acid biosynthesis; L-arginine biosynthesis; carbamoyl phosphate from bicarbonate: step 1/1. It functions in the pathway pyrimidine metabolism; UMP biosynthesis via de novo pathway; (S)-dihydroorotate from bicarbonate: step 1/3. Its function is as follows. Small subunit of the glutamine-dependent carbamoyl phosphate synthetase (CPSase). CPSase catalyzes the formation of carbamoyl phosphate from the ammonia moiety of glutamine, carbonate, and phosphate donated by ATP, constituting the first step of 2 biosynthetic pathways, one leading to arginine and/or urea and the other to pyrimidine nucleotides. The small subunit (glutamine amidotransferase) binds and cleaves glutamine to supply the large subunit with the substrate ammonia. The polypeptide is Carbamoyl phosphate synthase small chain (Metallosphaera sedula (strain ATCC 51363 / DSM 5348 / JCM 9185 / NBRC 15509 / TH2)).